The chain runs to 358 residues: Phosphoserine aminotransferase (358 aa).

An L-glutamate-binding site is contributed by R41. Residues 75–76 (AS), W100, T148, D167, and Q190 each bind pyridoxal 5'-phosphate. N6-(pyridoxal phosphate)lysine is present on K191. Residue 233–234 (NT) participates in pyridoxal 5'-phosphate binding.

It belongs to the class-V pyridoxal-phosphate-dependent aminotransferase family. SerC subfamily. Homodimer. The cofactor is pyridoxal 5'-phosphate.

The protein resides in the cytoplasm. It carries out the reaction O-phospho-L-serine + 2-oxoglutarate = 3-phosphooxypyruvate + L-glutamate. The catalysed reaction is 4-(phosphooxy)-L-threonine + 2-oxoglutarate = (R)-3-hydroxy-2-oxo-4-phosphooxybutanoate + L-glutamate. It participates in amino-acid biosynthesis; L-serine biosynthesis; L-serine from 3-phospho-D-glycerate: step 2/3. It functions in the pathway cofactor biosynthesis; pyridoxine 5'-phosphate biosynthesis; pyridoxine 5'-phosphate from D-erythrose 4-phosphate: step 3/5. Catalyzes the reversible conversion of 3-phosphohydroxypyruvate to phosphoserine and of 3-hydroxy-2-oxo-4-phosphonooxybutanoate to phosphohydroxythreonine. This chain is Phosphoserine aminotransferase, found in Campylobacter jejuni (strain RM1221).